Consider the following 28-residue polypeptide: Cyclotide vodo I3 (28 aa).

Intrachain disulfides connect C4–C18, C8–C20, and C13–C25.

Post-translationally, this is a cyclic peptide. Contains 3 disulfide bonds.

Functionally, probably participates in a plant defense mechanism. The chain is Cyclotide vodo I3 from Viola odorata (Sweet violet).